Consider the following 86-residue polypeptide: UPF0457 protein SSP0714 (86 aa).

Belongs to the UPF0457 family.

This Staphylococcus saprophyticus subsp. saprophyticus (strain ATCC 15305 / DSM 20229 / NCIMB 8711 / NCTC 7292 / S-41) protein is UPF0457 protein SSP0714.